The sequence spans 290 residues: Membrane-spanning 4-domains subfamily A member 8 (290 aa).

Polar residues predominate over residues 1–21; sequence MNRPTAQGAVNLSGSKFSTAK. Positions 1-25 are disordered; it reads MNRPTAQGAVNLSGSKFSTAKSWEP. Over 1–108 the chain is Cytoplasmic; sequence MNRPTAQGAV…PAQRVLKKGQ (108 aa). Residues 109 to 129 form a helical membrane-spanning segment; sequence VLGAIQILIGLVHIGLGSIMI. At 130–138 the chain is on the extracellular side; sequence TNLFSHYTP. Residues 139–159 traverse the membrane as a helical segment; sequence VSLYGGFPFWGGIWFIISGSL. Residues 160–174 lie on the Cytoplasmic side of the membrane; the sequence is SVAAETQPNSPCLLN. The chain crosses the membrane as a helical span at residues 175–195; that stretch reads GSVGLNIFSAICSAVGIMLFI. Topologically, residues 196–220 are extracellular; it reads TDISISSGYIYPSYYPYQENLGVRT. A helical membrane pass occupies residues 221 to 241; the sequence is GVAISSVLLIFCLLELSIASV. The Cytoplasmic portion of the chain corresponds to 242 to 290; sequence SSHFGCQVACCHYNNPGVVIPNVYAANPVVIPEPPNPIPSYSEVVQDSR.

The protein belongs to the MS4A family. Expressed strongly in intestine and colon and minimally in lung and ovary.

Its subcellular location is the membrane. May be involved in signal transduction as a component of a multimeric receptor complex. This is Membrane-spanning 4-domains subfamily A member 8 (Ms4a8) from Mus musculus (Mouse).